A 188-amino-acid polypeptide reads, in one-letter code: MKVILASASERRQELLSRLIKTFDVIVSNFDESKVIFEGSIDRYVKDIALGKAMNIKNKLDEDAIIISADTVVTIDNMILGKPRDEEDAFNIIKSLQGRKHLVYSGVVVINTAKNLTIQESLSTEVTFSEISDDEILEYIKTGEPLDKAGAYGIQGIGGIFVEEIRGCYYNVVGLPLNKLKFMLKEIQ.

Asp70 serves as the catalytic Proton acceptor.

Belongs to the Maf family. YhdE subfamily. A divalent metal cation is required as a cofactor.

It is found in the cytoplasm. It catalyses the reaction dTTP + H2O = dTMP + diphosphate + H(+). The catalysed reaction is UTP + H2O = UMP + diphosphate + H(+). In terms of biological role, nucleoside triphosphate pyrophosphatase that hydrolyzes dTTP and UTP. May have a dual role in cell division arrest and in preventing the incorporation of modified nucleotides into cellular nucleic acids. This chain is dTTP/UTP pyrophosphatase, found in Clostridium beijerinckii (strain ATCC 51743 / NCIMB 8052) (Clostridium acetobutylicum).